The chain runs to 304 residues: tRNA dimethylallyltransferase (304 aa).

An ATP-binding site is contributed by 10 to 17 (GPTASGKT). 12-17 (TASGKT) serves as a coordination point for substrate. Interaction with substrate tRNA regions lie at residues 35 to 38 (DSAL), 159 to 163 (QRLSR), and 240 to 245 (RCVGYR).

It belongs to the IPP transferase family. Monomer. The cofactor is Mg(2+).

The enzyme catalyses adenosine(37) in tRNA + dimethylallyl diphosphate = N(6)-dimethylallyladenosine(37) in tRNA + diphosphate. Functionally, catalyzes the transfer of a dimethylallyl group onto the adenine at position 37 in tRNAs that read codons beginning with uridine, leading to the formation of N6-(dimethylallyl)adenosine (i(6)A). This Shewanella putrefaciens (strain CN-32 / ATCC BAA-453) protein is tRNA dimethylallyltransferase.